Here is a 316-residue protein sequence, read N- to C-terminus: tRNA-cytidine(32) 2-sulfurtransferase (316 aa).

Positions 1–31 (MGAVIDDSMPGPGADATGTGPSDARTERETR) are disordered. Residues 10–21 (PGPGADATGTGP) show a composition bias toward low complexity. Positions 62 to 67 (SGGKDS) match the PP-loop motif motif. Residues C137, C140, and C228 each contribute to the [4Fe-4S] cluster site.

The protein belongs to the TtcA family. Homodimer. Requires Mg(2+) as cofactor. [4Fe-4S] cluster serves as cofactor.

The protein resides in the cytoplasm. It catalyses the reaction cytidine(32) in tRNA + S-sulfanyl-L-cysteinyl-[cysteine desulfurase] + AH2 + ATP = 2-thiocytidine(32) in tRNA + L-cysteinyl-[cysteine desulfurase] + A + AMP + diphosphate + H(+). It participates in tRNA modification. In terms of biological role, catalyzes the ATP-dependent 2-thiolation of cytidine in position 32 of tRNA, to form 2-thiocytidine (s(2)C32). The sulfur atoms are provided by the cysteine/cysteine desulfurase (IscS) system. This chain is tRNA-cytidine(32) 2-sulfurtransferase, found in Verminephrobacter eiseniae (strain EF01-2).